A 358-amino-acid chain; its full sequence is Capsid protein VP1/VP2 (358 aa).

Over residues 1–15 the composition is skewed to basic and acidic residues; it reads MADSTSMDHDGEQRG. Residues 1-37 form a disordered region; that stretch reads MADSTSMDHDGEQRGTKRKRDAGAGGSGAGIGKGTSN. The segment covering 23–33 has biased composition (gly residues); the sequence is GAGGSGAGIGK.

It is found in the virion. Capsid protein self-assembles to form an icosahedral capsid with a T=1 symmetry, about 22 nm in diameter, and consisting of 60 copies of size variants of the capsid proteins, which differ in the N-terminushe capsid encapsulates the genomic ssDNA. Capsid proteins are responsible for the attachment to host cell receptors. This attachment induces virion internalization predominantly through clathrin-dependent endocytosis. The sequence is that of Capsid protein VP1/VP2 (VP) from Aedes (Aedes densovirus).